The chain runs to 280 residues: MPELPEVETIKETLKLFVCNKTIKHIDIEWPNMIKHPDDVEEFKALVTGQTIRSMGRKGKFLLFYLDEYVLISHLRMEGKYSVHSPGDPVKKHTHVTFYFSNGEELRYNDVRKFGTMHVYPIGEEFMHKPLNQLGPDPFDTSFNLEYFYEKLKRTDRYIKTALLDQSIVTGLGNIYVDETLFRANVHPLKRCSKLSKQEVKKLQINAKETLRDAIKAGGTTIRSYVNTQGDMGMFQQDLYVYGQHSKPCRVCGADIIKIKVGGRGTHLCPTCQPNKQGVR.

The Schiff-base intermediate with DNA role is filled by Pro2. Catalysis depends on Glu3, which acts as the Proton donor. The Proton donor; for beta-elimination activity role is filled by Lys60. Residues His93 and Arg112 each coordinate DNA. The FPG-type zinc finger occupies 240-274; sequence YVYGQHSKPCRVCGADIIKIKVGGRGTHLCPTCQP. Catalysis depends on Arg264, which acts as the Proton donor; for delta-elimination activity.

It belongs to the FPG family. As to quaternary structure, monomer. It depends on Zn(2+) as a cofactor.

The catalysed reaction is Hydrolysis of DNA containing ring-opened 7-methylguanine residues, releasing 2,6-diamino-4-hydroxy-5-(N-methyl)formamidopyrimidine.. The enzyme catalyses 2'-deoxyribonucleotide-(2'-deoxyribose 5'-phosphate)-2'-deoxyribonucleotide-DNA = a 3'-end 2'-deoxyribonucleotide-(2,3-dehydro-2,3-deoxyribose 5'-phosphate)-DNA + a 5'-end 5'-phospho-2'-deoxyribonucleoside-DNA + H(+). In terms of biological role, involved in base excision repair of DNA damaged by oxidation or by mutagenic agents. Acts as a DNA glycosylase that recognizes and removes damaged bases. Has a preference for oxidized purines, such as 7,8-dihydro-8-oxoguanine (8-oxoG). Has AP (apurinic/apyrimidinic) lyase activity and introduces nicks in the DNA strand. Cleaves the DNA backbone by beta-delta elimination to generate a single-strand break at the site of the removed base with both 3'- and 5'-phosphates. This Oceanobacillus iheyensis (strain DSM 14371 / CIP 107618 / JCM 11309 / KCTC 3954 / HTE831) protein is Formamidopyrimidine-DNA glycosylase.